The sequence spans 167 residues: MARRFRGESNHKVDSKGRVSIPASFRRVLEAGDPNWQSGGNPELVIVYGDHRRKFLECYTMEAIDEVDAKIDALPRGSMERKMLQRMFHGQSFPTSVDETGRLVLPAKLRTKIALEDEAFFIAAGDTFQIWNPATYDQEELAAAEEWLDELPEDFDPMQYLDGAGGS.

SpoVT-AbrB domains are found at residues 8-51 and 92-135; these read ESNH…YGDH and SFPT…NPAT.

The protein belongs to the MraZ family. As to quaternary structure, forms oligomers.

The protein localises to the cytoplasm. It localises to the nucleoid. In Ruegeria pomeroyi (strain ATCC 700808 / DSM 15171 / DSS-3) (Silicibacter pomeroyi), this protein is Transcriptional regulator MraZ.